A 133-amino-acid polypeptide reads, in one-letter code: Holo-[acyl-carrier-protein] synthase (133 aa).

Asp8 and Glu64 together coordinate Mg(2+).

Belongs to the P-Pant transferase superfamily. AcpS family. Mg(2+) is required as a cofactor.

The protein localises to the cytoplasm. It catalyses the reaction apo-[ACP] + CoA = holo-[ACP] + adenosine 3',5'-bisphosphate + H(+). Its function is as follows. Transfers the 4'-phosphopantetheine moiety from coenzyme A to a Ser of acyl-carrier-protein. The polypeptide is Holo-[acyl-carrier-protein] synthase (Shewanella loihica (strain ATCC BAA-1088 / PV-4)).